A 252-amino-acid polypeptide reads, in one-letter code: 3-dehydroquinate dehydratase (252 aa).

3-dehydroquinate contacts are provided by residues Ser-21, 46 to 48 (EWR), and Arg-82. Catalysis depends on His-143, which acts as the Proton donor/acceptor. The active-site Schiff-base intermediate with substrate is Lys-170. 3-dehydroquinate is bound by residues Arg-213, Ser-232, and Gln-236.

The protein belongs to the type-I 3-dehydroquinase family. Homodimer.

The enzyme catalyses 3-dehydroquinate = 3-dehydroshikimate + H2O. It functions in the pathway metabolic intermediate biosynthesis; chorismate biosynthesis; chorismate from D-erythrose 4-phosphate and phosphoenolpyruvate: step 3/7. Its function is as follows. Involved in the third step of the chorismate pathway, which leads to the biosynthesis of aromatic amino acids. Catalyzes the cis-dehydration of 3-dehydroquinate (DHQ) and introduces the first double bond of the aromatic ring to yield 3-dehydroshikimate. The chain is 3-dehydroquinate dehydratase from Escherichia coli O9:H4 (strain HS).